The sequence spans 321 residues: Torsin-2A (321 aa).

A signal peptide spans 1–26 (MAVARHGYRPWGSILGLLGLALAAAA). An ATP-binding site is contributed by 93–100 (GWTGTGKS). Residue Asn-149 is glycosylated (N-linked (GlcNAc...) asparagine).

Belongs to the ClpA/ClpB family. Torsin subfamily. Homohexamer. Interacts with TOR1AIP1. N-glycosylated. As to expression, expressed at similar levels in liver, muscle and brain (at protein level).

Its subcellular location is the endoplasmic reticulum lumen. The polypeptide is Torsin-2A (Tor2a) (Mus musculus (Mouse)).